The sequence spans 196 residues: MGLELPLILGTSSVFRREQMERLGIAFQAASPDFDETPMLGESAPQTALRLAEGKARSLTGRFPEALIVGADQVAWCDGRQWGKPMNLANAQKMLMHLSGREIEFYSAIVLLNTVTGRMRRHIDKTVVVMRQLDELHILRYLEREPDAVYCSCALKSEDLGALLIERIESTDPNALIGLPVFRLVDFLKNEGVEVL.

Aspartate 72 serves as the catalytic Proton acceptor.

Belongs to the Maf family. YceF subfamily. A divalent metal cation is required as a cofactor.

The protein localises to the cytoplasm. It catalyses the reaction N(7)-methyl-GTP + H2O = N(7)-methyl-GMP + diphosphate + H(+). Functionally, nucleoside triphosphate pyrophosphatase that hydrolyzes 7-methyl-GTP (m(7)GTP). May have a dual role in cell division arrest and in preventing the incorporation of modified nucleotides into cellular nucleic acids. This Neisseria meningitidis serogroup B (strain ATCC BAA-335 / MC58) protein is 7-methyl-GTP pyrophosphatase.